The following is a 950-amino-acid chain: Synaptotagmin-like protein 2 (950 aa).

The region spanning 1 to 57 (MIDLSFLTEEEQDAILKVLQRDAALKRAEEERVRHLPEKIKDDQQLKNMSGQWFYEA) is the RabBD domain. Disordered regions lie at residues 78 to 98 (RKKL…AKES), 116 to 289 (VEEP…ETLR), and 361 to 620 (ESDQ…SSSG). Residues 87-97 (QNKDTAMRAKE) show a composition bias toward basic and acidic residues. 2 stretches are compositionally biased toward polar residues: residues 140-150 (IDMSQESTRTP) and 173-183 (LQQTKPEQSKT). Over residues 193–205 (KEGELSESKEKSS) the composition is skewed to basic and acidic residues. The span at 219 to 230 (QTVSTEPENASH) shows a compositional bias: polar residues. Residues 246–264 (NDLEKDDNQSFPRQRRDSL) are compositionally biased toward basic and acidic residues. Residues 434–445 (VESSSVINGQQE) show a composition bias toward polar residues. 2 stretches are compositionally biased toward basic and acidic residues: residues 479–502 (HSFR…LERR) and 531–544 (ELVR…KADQ). Positions 557–567 (TVPSLPDNQFS) are enriched in polar residues. Low complexity predominate over residues 608 to 620 (SPSSLTNLSSSSG). 2 C2 domains span residues 644–769 (VKGS…LKWY) and 784–913 (NRGE…VDWM).

In terms of assembly, monomer. Binds NRXN1. Binds RAB27A that has been activated by GTP-binding. Interacts with RAB27B. Post-translationally, isoform 1 is highly susceptible to proteolytic degradation and is stabilized by the interaction with RAB27A. Highly expressed in brain, lung, kidney, testis and in embryos after day 7. Detected at lower levels in skeletal muscle. Expressed in pancreatic alpha cells. Isoform 6 is highly expressed in brain, but not detectable in the other tissues tested. Isoform 1 is expressed abundantly in the stomach and is predominantly localized at the apical region of gastric-surface mucus cells. Isoform 11 is expressed in cytotoxic T-lymphocytes (CTL).

The protein resides in the melanosome membrane. Its subcellular location is the cell membrane. Functionally, isoform 11 acts as a RAB27A effector protein and plays a role in cytotoxic granule exocytosis in lymphocytes. Required for cytotoxic granule docking at the immunologic synapse. Isoform 1 may play a role in melanosome transport and vesicle trafficking. It controls melanosome distribution in the cell periphery and regulates melanocyte morphology. Isoform 1 acts as a positive mediator of mucus secretion by the surface mucus cells of the stomach. Mediates basal mucus secretion by gastric surface cells by promoting the proper granule biognesis and docking of mucus granules with the apical plasma membrane. This Mus musculus (Mouse) protein is Synaptotagmin-like protein 2 (Sytl2).